Consider the following 187-residue polypeptide: Resolvase OPG149 (187 aa).

It belongs to the RuvC family. Poxviruses-type subfamily. Mg(2+) is required as a cofactor.

Its function is as follows. Plays a role in DNA replication by cleaving viral DNA concatamers to yield unit-length viral genomes. The concatamer junctions contain inverted repeat sequences that can be extruded as cruciforms, yielding Holliday junctions that A22 protein cleaves. The chain is Resolvase OPG149 (OPG149) from Vaccinia virus (strain Western Reserve) (VACV).